A 142-amino-acid polypeptide reads, in one-letter code: Large ribosomal subunit protein uL11 (142 aa).

It belongs to the universal ribosomal protein uL11 family. Part of the ribosomal stalk of the 50S ribosomal subunit. Interacts with L10 and the large rRNA to form the base of the stalk. L10 forms an elongated spine to which L12 dimers bind in a sequential fashion forming a multimeric L10(L12)X complex. In terms of processing, one or more lysine residues are methylated.

Its function is as follows. Forms part of the ribosomal stalk which helps the ribosome interact with GTP-bound translation factors. In Pectobacterium atrosepticum (strain SCRI 1043 / ATCC BAA-672) (Erwinia carotovora subsp. atroseptica), this protein is Large ribosomal subunit protein uL11.